The primary structure comprises 760 residues: Anti-sigma-I factor RsgI6 (760 aa).

The Cytoplasmic portion of the chain corresponds to 1–55 (MIVGKVLDMDEKTAIIMTDDFAFLNVVRTSEMAVGKKVKVLDSDIIKPKNSLRRY). One can recognise a RsgI N-terminal anti-sigma domain in the interval 2-49 (IVGKVLDMDEKTAIIMTDDFAFLNVVRTSEMAVGKKVKVLDSDIIKPK). The helical transmembrane segment at 56-76 (LPVAAVAACFVIVLSFVLMFI) threads the bilayer. Over 77-760 (NGNTARKNIY…GTLQTTYRIP (684 aa)) the chain is Extracellular. The interval 274-352 (AINTGPAESA…STPKPVSPVQ (79 aa)) is disordered. Residues 291–352 (LPATSTPGRT…STPKPVSPVQ (62 aa)) are compositionally biased toward polar residues. A GH10 domain is found at 402 to 701 (DSSNKPIENA…NEAGRRFESL (300 aa)). The active-site Proton donor is the Glu538. Residue Glu635 is the Nucleophile of the active site.

It in the C-terminal section; belongs to the glycosyl hydrolase 10 (cellulase F) family. As to quaternary structure, interacts (via RsgI N-terminal anti-sigma domain) with SigI6.

The protein localises to the cell membrane. The enzyme catalyses Endohydrolysis of (1-&gt;4)-beta-D-xylosidic linkages in xylans.. It participates in glycan degradation; xylan degradation. Functionally, anti-sigma factor for SigI6. Negatively regulates SigI6 activity through direct interaction. Binding of the polysaccharide substrate to the extracellular C-terminal sensing domain of RsgI6 may induce a conformational change in its N-terminal cytoplasmic region, leading to the release and activation of SigI6. Binds to and hydrolyzes insoluble and soluble xylan substrates. Has low enzymatic activity. The sequence is that of Anti-sigma-I factor RsgI6 from Acetivibrio thermocellus (strain ATCC 27405 / DSM 1237 / JCM 9322 / NBRC 103400 / NCIMB 10682 / NRRL B-4536 / VPI 7372) (Clostridium thermocellum).